The sequence spans 144 residues: Large ribosomal subunit protein uL13 (144 aa).

Belongs to the universal ribosomal protein uL13 family. In terms of assembly, part of the 50S ribosomal subunit.

In terms of biological role, this protein is one of the early assembly proteins of the 50S ribosomal subunit, although it is not seen to bind rRNA by itself. It is important during the early stages of 50S assembly. The chain is Large ribosomal subunit protein uL13 from Mesomycoplasma hyopneumoniae (strain 232) (Mycoplasma hyopneumoniae).